Here is a 461-residue protein sequence, read N- to C-terminus: Ornithine decarboxylase (461 aa).

K69 carries the N6-(pyridoxal phosphate)lysine modification. Residues S200, G237, and E274 to R277 each bind pyridoxal 5'-phosphate. S303 is subject to Phosphoserine; by CK2. Y331–D332 contacts substrate. C360 (proton donor; shared with dimeric partner) is an active-site residue. C360 is subject to S-nitrosocysteine. D361 is a substrate binding site. A pyridoxal 5'-phosphate-binding site is contributed by Y389.

Belongs to the Orn/Lys/Arg decarboxylase class-II family. As to quaternary structure, homodimer. Only the dimer is catalytically active, as the active sites are constructed of residues from both monomers. Does not form a heterodimer with AZIN2. Pyridoxal 5'-phosphate is required as a cofactor. As to expression, expressed during testis development in the outer part of the seminiferous tubules.

The catalysed reaction is L-ornithine + H(+) = putrescine + CO2. The protein operates within amine and polyamine biosynthesis; putrescine biosynthesis via L-ornithine pathway; putrescine from L-ornithine: step 1/1. With respect to regulation, inhibited by antizymes (AZs) OAZ1, OAZ2 and OAZ3 in response to polyamine levels. AZs inhibit the assembly of the functional homodimer by binding to ODC monomers. Additionally, OAZ1 targets ODC monomers for ubiquitin-independent proteolytic destruction by the 26S proteasome. Functionally, catalyzes the first and rate-limiting step of polyamine biosynthesis that converts ornithine into putrescine, which is the precursor for the polyamines, spermidine and spermine. Polyamines are essential for cell proliferation and are implicated in cellular processes, ranging from DNA replication to apoptosis. The protein is Ornithine decarboxylase (Odc1) of Mus musculus (Mouse).